The following is a 148-amino-acid chain: Deoxyuridine 5'-triphosphate nucleotidohydrolase (148 aa).

Substrate-binding positions include 67–69 (RSG), asparagine 80, 84–86 (LID), and methionine 94.

This sequence belongs to the dUTPase family. Mg(2+) is required as a cofactor.

The catalysed reaction is dUTP + H2O = dUMP + diphosphate + H(+). Its pathway is pyrimidine metabolism; dUMP biosynthesis; dUMP from dCTP (dUTP route): step 2/2. In terms of biological role, this enzyme is involved in nucleotide metabolism: it produces dUMP, the immediate precursor of thymidine nucleotides and it decreases the intracellular concentration of dUTP so that uracil cannot be incorporated into DNA. In Francisella tularensis subsp. tularensis (strain FSC 198), this protein is Deoxyuridine 5'-triphosphate nucleotidohydrolase.